The following is a 225-amino-acid chain: Thymidine kinase (225 aa).

8 to 15 (GPMFSGKT) serves as a coordination point for ATP. Residue Glu-92 is the Proton acceptor of the active site. Tyr-122 provides a ligand contact to substrate. Zn(2+) contacts are provided by Cys-147 and Cys-150. Substrate is bound at residue 167–171 (KILVG). 2 residues coordinate Zn(2+): Cys-180 and Cys-183. A compositionally biased stretch (polar residues) spans 197–207 (SEQINNQTELS). Residues 197–225 (SEQINNQTELSEPTRQKESLKIKKRRIDS) are disordered. The segment covering 208–225 (EPTRQKESLKIKKRRIDS) has biased composition (basic and acidic residues).

This sequence belongs to the thymidine kinase family.

It catalyses the reaction thymidine + ATP = dTMP + ADP + H(+). The polypeptide is Thymidine kinase (TK) (Acanthamoeba polyphaga mimivirus (APMV)).